The following is a 325-amino-acid chain: Probable ABC transporter permease YtrD (325 aa).

8 helical membrane-spanning segments follow: residues V16–M36, S63–I83, M113–L133, L146–T166, V179–G199, Y233–V253, P272–A292, and G298–I318.

It belongs to the ABC-5 integral membrane protein family. The complex is composed of 2 ATP-binding proteins (YtrB and YtrE), 2 transmembrane proteins (YtrC and YtrD) and a solute-binding protein (YtrF).

It is found in the cell membrane. Part of the ABC transporter complex YtrBCDEF that plays a role in acetoin utilization during stationary phase and sporulation. The protein is Probable ABC transporter permease YtrD (ytrD) of Bacillus subtilis (strain 168).